We begin with the raw amino-acid sequence, 691 residues long: DNA ligase (691 aa).

NAD(+)-binding positions include 41–45 (DAEYD), 90–91 (SL), and Glu-130. Lys-132 (N6-AMP-lysine intermediate) is an active-site residue. The NAD(+) site is built by Arg-153, Glu-190, Lys-307, and Lys-331. Zn(2+) contacts are provided by Cys-425, Cys-428, Cys-443, and Cys-449. Residues 610–691 (APQGVLAGKT…LHQLLEGNTP (82 aa)) enclose the BRCT domain.

This sequence belongs to the NAD-dependent DNA ligase family. LigA subfamily. The cofactor is Mg(2+). It depends on Mn(2+) as a cofactor.

It catalyses the reaction NAD(+) + (deoxyribonucleotide)n-3'-hydroxyl + 5'-phospho-(deoxyribonucleotide)m = (deoxyribonucleotide)n+m + AMP + beta-nicotinamide D-nucleotide.. In terms of biological role, DNA ligase that catalyzes the formation of phosphodiester linkages between 5'-phosphoryl and 3'-hydroxyl groups in double-stranded DNA using NAD as a coenzyme and as the energy source for the reaction. It is essential for DNA replication and repair of damaged DNA. The chain is DNA ligase from Burkholderia cenocepacia (strain HI2424).